Reading from the N-terminus, the 333-residue chain is D-fructose 1,6-bisphosphatase class 2/sedoheptulose 1,7-bisphosphatase (333 aa).

Mn(2+)-binding residues include D33, E57, D85, and E88. Substrate contacts are provided by residues 88-90 (EGT), Y119, 164-166 (RAR), and 186-188 (DGD). E213 lines the Mn(2+) pocket.

Belongs to the FBPase class 2 family. As to quaternary structure, homotetramer. It depends on Mn(2+) as a cofactor.

The catalysed reaction is beta-D-fructose 1,6-bisphosphate + H2O = beta-D-fructose 6-phosphate + phosphate. It catalyses the reaction D-sedoheptulose 1,7-bisphosphate + H2O = D-sedoheptulose 7-phosphate + phosphate. The protein operates within carbohydrate biosynthesis; Calvin cycle. Functionally, catalyzes the hydrolysis of fructose 1,6-bisphosphate (Fru 1,6-P2) and sedoheptulose 1,7-bisphosphate (Sed 1,7-P2) to fructose 6-phosphate and sedoheptulose 7-phosphate, respectively. The protein is D-fructose 1,6-bisphosphatase class 2/sedoheptulose 1,7-bisphosphatase of Prochlorococcus marinus subsp. pastoris (strain CCMP1986 / NIES-2087 / MED4).